The chain runs to 136 residues: Large ribosomal subunit protein uL16c (136 aa).

This sequence belongs to the universal ribosomal protein uL16 family. Part of the 50S ribosomal subunit.

Its subcellular location is the plastid. It localises to the chloroplast. The sequence is that of Large ribosomal subunit protein uL16c from Oryza sativa (Rice).